Here is a 591-residue protein sequence, read N- to C-terminus: Putative F-box protein At1g32140 (591 aa).

The F-box domain occupies 2–49 (TMMSDLSLDLVEEILCRVPITSLKAVRSSCKLWNVLSKNRILCKTEAR). The span at 567-581 (AGRKRKEKKTKRKSK) shows a compositional bias: basic residues. The disordered stretch occupies residues 567–591 (AGRKRKEKKTKRKSKDKQMKLSNKV).

The polypeptide is Putative F-box protein At1g32140 (Arabidopsis thaliana (Mouse-ear cress)).